The chain runs to 1401 residues: Enhancer of mRNA-decapping protein 4 (1401 aa).

An N-acetylalanine modification is found at alanine 2. A phosphoserine mark is found at serine 3 and serine 6. A disordered region spans residues 23–42 (DRPAGGPSAESPRPSSAYNG). WD repeat units follow at residues 121–164 (QPVA…VISV), 167–206 (SERT…VWRL), 217–269 (ILVH…VWDL), 287–326 (KQGF…FWQI), 335–385 (RCLH…MWCT), 389–426 (TCLQ…LSDV), and 432–475 (YVME…LRHT). Lysine 125 bears the N6-acetyllysine mark. The tract at residues 545–565 (TFGESRPELGSEGLGSAAHGS) is disordered. 4 positions are modified to phosphoserine: serine 560, serine 565, serine 583, and serine 585. Disordered regions lie at residues 603–628 (ASLQ…SSSS) and 662–702 (DGSL…QVPT). A compositionally biased stretch (low complexity) spans 609–628 (TASPSSSSSGSSSSSSSSSS). The segment covering 663–675 (GSLTMSSSGSLQA) has biased composition (polar residues). The residue at position 676 (serine 676) is a Phosphoserine. The span at 677-689 (PRGLLPGLLPAPA) shows a compositional bias: low complexity. Threonine 693 carries the phosphothreonine modification. 3 positions are modified to phosphoserine: serine 708, serine 723, and serine 725. Disordered regions lie at residues 717–741 (LGLP…TALS) and 778–808 (LLSP…HNTP). Residues 722–741 (ASPSRTRSPDVISSASTALS) show a composition bias toward polar residues. Threonine 727 is modified (phosphothreonine). A phosphoserine mark is found at serine 729 and serine 741. The residue at position 821 (threonine 821) is a Phosphothreonine. 7 positions are modified to phosphoserine: serine 844, serine 871, serine 875, serine 879, serine 887, serine 890, and serine 892. A disordered region spans residues 868–946 (QRDSQDASAE…RLTEHQVAEP (79 aa)). The sufficient for nuclear localization stretch occupies residues 913 to 934 (GSPRTSPKLKRKSKKDDGDAAM). The stretch at 954-1025 (IWQQQRELAE…GGQLQEQLTQ (72 aa)) forms a coiled coil. Residues serine 967 and serine 1380 each carry the phosphoserine modification.

It belongs to the WD repeat EDC4 family. As to quaternary structure, part of a decapping complex consisting of DCP1A, DCP2, EDC3, EDC4 and probably DDX6. Part of a complex consisting of DCP1A, EDC3, EDC4 and DDX6. Part of a complex consisting of DCP1B, EDC3, EDC4 and DDX6. Interacts with DCP2. Interacts with RC3H1. Interacts with NBDY. Interacts with TEX19. Interacts with LSM14A. Interacts with DDX6. In terms of assembly, (Microbial infection) Interacts with rotavirus A non-structural protein 2; this interaction probably plays a role in the sequestration of EDC4 in viral factories. Interacts with rotavirus A non-structural protein 5; this interaction probably plays a role in its sequestration in viral factories.

Its subcellular location is the cytoplasm. The protein localises to the P-body. It localises to the nucleus. In terms of biological role, in the process of mRNA degradation, seems to play a role in mRNA decapping. Component of a complex containing DCP2 and DCP1A which functions in decapping of ARE-containing mRNAs. Promotes complex formation between DCP1A and DCP2. Enhances the catalytic activity of DCP2 (in vitro). In Homo sapiens (Human), this protein is Enhancer of mRNA-decapping protein 4 (EDC4).